Consider the following 399-residue polypeptide: Lipid droplet-regulating VLDL assembly factor AUP1 (399 aa).

Residues 1-21 (MEQPSLESMLELQRFPRNPFS) are Cytoplasmic-facing. The stretch at 22-42 (LVLLLLYFPFGLCLFLIRLFI) is an intramembrane region. Over 43-399 (GAHVFLVSCV…GEEEEEGARG (357 aa)) the chain is Cytoplasmic. The CUE domain maps to 284 to 326 (THIQMAQHVKEVLPQVPLSAIHRDLGHTGCVDTTITNFLEGRV). The segment at 332–364 (EEETTGAAEGTSKSRVSRPLPQGFAKKPEDRHL) is disordered.

It belongs to the AUP1 family.

Its subcellular location is the endoplasmic reticulum membrane. It localises to the lipid droplet. Functionally, plays a role in the translocation of terminally misfolded proteins from the endoplasmic reticulum lumen to the cytoplasm and their degradation by the proteasome. Plays a role in lipid droplet formation. Induces lipid droplet clustering. The chain is Lipid droplet-regulating VLDL assembly factor AUP1 from Xenopus laevis (African clawed frog).